Consider the following 285-residue polypeptide: Ret finger protein-like 4A (285 aa).

Residues 11-53 (CYFCFRYLENPVYLNCGYICCFQCLDSLEKSPEGDGVLCPNCS) form an RING-type; degenerate zinc finger. Residues 78-276 (EPQLNFILTM…ISICPVMNPS (199 aa)) enclose the B30.2/SPRY domain.

Interacts with PSMB1, UBE2A and CCNB1.

Its subcellular location is the cytoplasm. It is found in the nucleus. The chain is Ret finger protein-like 4A (Rfpl4a) from Rattus norvegicus (Rat).